Reading from the N-terminus, the 107-residue chain is Period circadian protein (107 aa).

The segment at 81–107 (ITNGSNTGTGTSSGSFQPPLLTEALLN) is disordered. The segment covering 82–95 (TNGSNTGTGTSSGS) has biased composition (low complexity).

As to quaternary structure, forms a heterodimer with timeless (TIM); the complex then translocates into the nucleus. In terms of processing, phosphorylated with a circadian rhythmicity, probably by the double-time protein (dbt). Phosphorylation could be implicated in the stability of per monomer and in the formation of heterodimer per-tim.

Its subcellular location is the nucleus. The protein resides in the cytoplasm. It localises to the perinuclear region. Functionally, essential for biological clock functions. Determines the period length of circadian and ultradian rhythms; an increase in PER dosage leads to shortened circadian rhythms and a decrease leads to lengthened circadian rhythms. Essential for the circadian rhythmicity of locomotor activity, eclosion behavior, and for the rhythmic component of the male courtship song that originates in the thoracic nervous system. The biological cycle depends on the rhythmic formation and nuclear localization of the TIM-PER complex. Light induces the degradation of TIM, which promotes elimination of PER. Nuclear activity of the heterodimer coordinatively regulates PER and TIM transcription through a negative feedback loop. Behaves as a negative element in circadian transcriptional loop. Does not appear to bind DNA, suggesting indirect transcriptional inhibition. In Beris vallata (Common orange legionnaire), this protein is Period circadian protein (per).